The chain runs to 492 residues: Cobyric acid synthase (492 aa).

The GATase cobBQ-type domain occupies 252 to 440; it reads RPKIAVLAYP…VHGLFADDHL (189 aa). Cys334 acts as the Nucleophile in catalysis. The active site involves His432.

It belongs to the CobB/CobQ family. CobQ subfamily.

The protein operates within cofactor biosynthesis; adenosylcobalamin biosynthesis. Catalyzes amidations at positions B, D, E, and G on adenosylcobyrinic A,C-diamide. NH(2) groups are provided by glutamine, and one molecule of ATP is hydrogenolyzed for each amidation. The polypeptide is Cobyric acid synthase (Bradyrhizobium sp. (strain BTAi1 / ATCC BAA-1182)).